We begin with the raw amino-acid sequence, 365 residues long: D-alanine--D-alanine ligase (365 aa).

Residues 156–360 form the ATP-grasp domain; it reads KKLMAAEGLP…YAQLLDNLIE (205 aa). 183–238 serves as a coordination point for ATP; that stretch reads KRELGLPVFVKPARGGSSIGISRVADWSEWDAALSLAREHDSKVIVEAEIVGVEVE. Mg(2+)-binding residues include D315, E327, and N329.

It belongs to the D-alanine--D-alanine ligase family. It depends on Mg(2+) as a cofactor. The cofactor is Mn(2+).

The protein resides in the cytoplasm. The enzyme catalyses 2 D-alanine + ATP = D-alanyl-D-alanine + ADP + phosphate + H(+). The protein operates within cell wall biogenesis; peptidoglycan biosynthesis. Functionally, cell wall formation. The chain is D-alanine--D-alanine ligase from Corynebacterium diphtheriae (strain ATCC 700971 / NCTC 13129 / Biotype gravis).